We begin with the raw amino-acid sequence, 167 residues long: 3-isopropylmalate dehydratase small subunit (167 aa).

Belongs to the LeuD family. LeuD type 2 subfamily. In terms of assembly, heterodimer of LeuC and LeuD.

It catalyses the reaction (2R,3S)-3-isopropylmalate = (2S)-2-isopropylmalate. Its pathway is amino-acid biosynthesis; L-leucine biosynthesis; L-leucine from 3-methyl-2-oxobutanoate: step 2/4. Functionally, catalyzes the isomerization between 2-isopropylmalate and 3-isopropylmalate, via the formation of 2-isopropylmaleate. This chain is 3-isopropylmalate dehydratase small subunit, found in Wolinella succinogenes (strain ATCC 29543 / DSM 1740 / CCUG 13145 / JCM 31913 / LMG 7466 / NCTC 11488 / FDC 602W) (Vibrio succinogenes).